An 875-amino-acid polypeptide reads, in one-letter code: Probable ATP-dependent RNA helicase DDX10 (875 aa).

The Q motif signature appears at Q73–R101. ATP contacts are provided by residues Y93–M95, Q100, and A117–T124. The 175-residue stretch at I104 to V278 folds into the Helicase ATP-binding domain. The short motif at D226–D229 is the DEAD box element. The region spanning T291–T453 is the Helicase C-terminal domain. Disordered stretches follow at residues K528–T633, D653–Q672, and K743–T856. Basic and acidic residues-rich tracts occupy residues E529 to Q541 and R569 to E580. The segment covering F624–T633 has biased composition (acidic residues). A coiled-coil region spans residues D736–T773. Residues R752 to G771 are compositionally biased toward basic and acidic residues. The span at S800 to E809 shows a compositional bias: acidic residues. The span at D810–S819 shows a compositional bias: basic and acidic residues.

Belongs to the DEAD box helicase family. DDX10/DBP4 subfamily.

It carries out the reaction ATP + H2O = ADP + phosphate + H(+). In terms of biological role, putative ATP-dependent RNA helicase. This Gallus gallus (Chicken) protein is Probable ATP-dependent RNA helicase DDX10 (DDX10).